The chain runs to 413 residues: Terephthalate 1,2-dioxygenase, terminal oxygenase component subunit alpha 2 (413 aa).

The 104-residue stretch at 41 to 144 folds into the Rieske domain; that stretch reads NYLCLESEIP…CKEEHGPRKL (104 aa). Residues Cys82, His84, Cys102, and His105 each coordinate [2Fe-2S] cluster.

It belongs to the bacterial ring-hydroxylating dioxygenase alpha subunit family. Heterotetramer composed of 2 alpha (TphA2I and TphA2II) and 2 beta (TphA3I and TphA3II) subunits. Part of a multicomponent enzyme system composed of a reductase (TphA1I or TphA1II) and a two-subunit oxygenase component (TphA2I or TphA2II and TphA3I or TphA3II). It depends on Fe cation as a cofactor. Requires [2Fe-2S] cluster as cofactor.

The enzyme catalyses terephthalate + NADH + O2 + H(+) = (3S,4R)-3,4-dihydroxycyclohexa-1,5-diene-1,4-dicarboxylate + NAD(+). Inhibited by EDTA. Its function is as follows. Component of the terephthalate 1,2-dioxygenase multicomponent enzyme system which catalyzes the dioxygenation of terephthalate (TER/TPA) to 1,2-dihydroxy-3,5-cyclohexadiene-1,4-dicarboxylic acid (DCD). It can also use 2,5-dicarboxypyridine (PDC) and 1,4-napthalenedicarboxylic acid (NDC) as substrates, and preferentially uses NADPH which is the physiological electron donor. In Comamonas sp, this protein is Terephthalate 1,2-dioxygenase, terminal oxygenase component subunit alpha 2 (tphA2II).